Consider the following 274-residue polypeptide: Phosphatidylglycerol--prolipoprotein diacylglyceryl transferase (274 aa).

Transmembrane regions (helical) follow at residues 24–44 (WYAL…RFLS), 60–80 (LLVW…VVFY), 96–116 (WHGG…TVLF), and 122–142 (LSVA…LFFG). R143 provides a ligand contact to a 1,2-diacyl-sn-glycero-3-phospho-(1'-sn-glycerol). Transmembrane regions (helical) follow at residues 182-202 (ATLE…FTAL), 207-227 (GQII…AEFF), and 241-261 (VTMG…VFVV).

Belongs to the Lgt family.

It is found in the cell inner membrane. It carries out the reaction L-cysteinyl-[prolipoprotein] + a 1,2-diacyl-sn-glycero-3-phospho-(1'-sn-glycerol) = an S-1,2-diacyl-sn-glyceryl-L-cysteinyl-[prolipoprotein] + sn-glycerol 1-phosphate + H(+). It functions in the pathway protein modification; lipoprotein biosynthesis (diacylglyceryl transfer). Its function is as follows. Catalyzes the transfer of the diacylglyceryl group from phosphatidylglycerol to the sulfhydryl group of the N-terminal cysteine of a prolipoprotein, the first step in the formation of mature lipoproteins. The chain is Phosphatidylglycerol--prolipoprotein diacylglyceryl transferase from Rhodospirillum rubrum (strain ATCC 11170 / ATH 1.1.1 / DSM 467 / LMG 4362 / NCIMB 8255 / S1).